Here is a 407-residue protein sequence, read N- to C-terminus: Argininosuccinate synthase (407 aa).

Residues 16 to 24 (AYSGGLDTS) and Ala44 each bind ATP. 2 residues coordinate L-citrulline: Tyr96 and Ser101. Position 126 (Gly126) interacts with ATP. 3 residues coordinate L-aspartate: Thr128, Asn132, and Asp133. An L-citrulline-binding site is contributed by Asn132. The L-citrulline site is built by Arg136, Ser185, Ser194, Glu270, and Tyr282.

The protein belongs to the argininosuccinate synthase family. Type 1 subfamily. Homotetramer.

The protein resides in the cytoplasm. It carries out the reaction L-citrulline + L-aspartate + ATP = 2-(N(omega)-L-arginino)succinate + AMP + diphosphate + H(+). Its pathway is amino-acid biosynthesis; L-arginine biosynthesis; L-arginine from L-ornithine and carbamoyl phosphate: step 2/3. The polypeptide is Argininosuccinate synthase (Shewanella amazonensis (strain ATCC BAA-1098 / SB2B)).